The following is a 366-amino-acid chain: MKFVVSRNELGNLIKKIQSVVPQNTPIPVLTHVLIETYNDELVFTATDLTVSTRCVTKAKVYEKGAISIPSKRFFQLVKELTEANLEISSSAGEMAQITSGSSCFRLLSMEKEDFPMLPDIQNALRFSLPAEQLKTMLQRTSFAVSREESRYVLTGVLLAIANGVATIVGTDGKRLAKIDAEVTLDKSFSGEYIIPIKAVEEIIKMCSDEGEATIFLDQDKIAVECDNTLLITKLLSGEFPDFSPVISTESNVKLDLHREELITLLKQVALFTNESSHSVKFSFLPGELTLTANCTKVGEGKVSMAVNYSGELLEIAFNPFFFLDILKHSKDELVSLGISDSYNPGIITDSASGLFVIMPMRLHDD.

It belongs to the beta sliding clamp family. Forms a ring-shaped head-to-tail homodimer around DNA which binds and tethers DNA polymerases and other proteins to the DNA. The DNA replisome complex has a single clamp-loading complex (3 tau and 1 each of delta, delta', psi and chi subunits) which binds 3 Pol III cores (1 core on the leading strand and 2 on the lagging strand) each with a beta sliding clamp dimer. Additional proteins in the replisome are other copies of gamma, psi and chi, Ssb, DNA helicase and RNA primase.

Its subcellular location is the cytoplasm. Its function is as follows. Confers DNA tethering and processivity to DNA polymerases and other proteins. Acts as a clamp, forming a ring around DNA (a reaction catalyzed by the clamp-loading complex) which diffuses in an ATP-independent manner freely and bidirectionally along dsDNA. Initially characterized for its ability to contact the catalytic subunit of DNA polymerase III (Pol III), a complex, multichain enzyme responsible for most of the replicative synthesis in bacteria; Pol III exhibits 3'-5' exonuclease proofreading activity. The beta chain is required for initiation of replication as well as for processivity of DNA replication. The polypeptide is Beta sliding clamp (dnaN) (Chlamydia pneumoniae (Chlamydophila pneumoniae)).